We begin with the raw amino-acid sequence, 108 residues long: Complement inhibitor CirpT4 (108 aa).

An N-terminal signal peptide occupies residues 1–19 (MRAFVALFCTLVAFATVIC). Disulfide bonds link Cys40/Cys64, Cys59/Cys98, Cys76/Cys99, and Cys85/Cys104.

Belongs to the CirpT family. Expressed in salivary glands.

It localises to the secreted. Complement inhibitor. Prevents complement-mediated activation of C5 by sterically preventing direct binding of C5 to its convertase (binding with domains MG4 and MG5). Binds C5 at a different binding site than the other tick complement inhibitors OmCI and RaCI3, and the drug eculizumab. Inhibits the complement in human, rat and guinea pig, and also shows a reduced inhibition in rabbit and pig. In Amblyomma americanum (Lone star tick), this protein is Complement inhibitor CirpT4.